Consider the following 119-residue polypeptide: Large ribosomal subunit protein bL20 (119 aa).

Belongs to the bacterial ribosomal protein bL20 family.

In terms of biological role, binds directly to 23S ribosomal RNA and is necessary for the in vitro assembly process of the 50S ribosomal subunit. It is not involved in the protein synthesizing functions of that subunit. This Rhodospirillum centenum (strain ATCC 51521 / SW) protein is Large ribosomal subunit protein bL20.